Consider the following 368-residue polypeptide: RING finger protein 32 (368 aa).

Residues 45-82 form a disordered region; that stretch reads RKKEKKSKSLKRDATAIIDTGLRKSTEGPNMEDPEKEY. The segment at 129 to 171 adopts an RING-type 1; atypical zinc-finger fold; sequence CPICKEEFELHPQVLLSCSHVFHRACLQAFEKFTNKKTCPLCR. The 30-residue stretch at 188–217 folds into the IQ domain; it reads RVKCATRIQAYWRGYIVRKWYRNLRKIIPP. The segment at 295-358 adopts an RING-type 2; atypical zinc-finger fold; that stretch reads CSICLTPLSF…APFHVCPLCR (64 aa).

The protein resides in the cytoplasm. May play a role in sperm formation. The sequence is that of RING finger protein 32 (Rnf32) from Mus musculus (Mouse).